Consider the following 378-residue polypeptide: N-acetyldiaminopimelate deacetylase (378 aa).

Asp72 is an active-site residue. Glu131 serves as the catalytic Proton acceptor.

It belongs to the peptidase M20A family. N-acetyldiaminopimelate deacetylase subfamily.

It carries out the reaction N-acetyl-(2S,6S)-2,6-diaminopimelate + H2O = (2S,6S)-2,6-diaminopimelate + acetate. It functions in the pathway amino-acid biosynthesis; L-lysine biosynthesis via DAP pathway; LL-2,6-diaminopimelate from (S)-tetrahydrodipicolinate (acetylase route): step 3/3. Its function is as follows. Catalyzes the conversion of N-acetyl-diaminopimelate to diaminopimelate and acetate. The chain is N-acetyldiaminopimelate deacetylase from Enterococcus faecalis (strain ATCC 700802 / V583).